The sequence spans 217 residues: Probable GTP-binding protein EngB (217 aa).

The region spanning 27 to 201 (TGIEVAFAGR…RDKLDTWFSE (175 aa)) is the EngB-type G domain. GTP contacts are provided by residues 35–42 (GRSNAGKS), 62–66 (GRTQL), 80–83 (DLPG), 147–150 (TKAD), and 180–182 (FSS). Positions 42 and 64 each coordinate Mg(2+).

It belongs to the TRAFAC class TrmE-Era-EngA-EngB-Septin-like GTPase superfamily. EngB GTPase family. Requires Mg(2+) as cofactor.

Necessary for normal cell division and for the maintenance of normal septation. The chain is Probable GTP-binding protein EngB from Edwardsiella ictaluri (strain 93-146).